The following is a 282-amino-acid chain: Transcription factor MYB20 (282 aa).

2 HTH myb-type domains span residues 9–61 (KVGL…TNYL) and 62–116 (RPDL…KKKL). 2 consecutive DNA-binding regions (H-T-H motif) follow at residues 37–61 (WRAV…TNYL) and 89–112 (WSKI…NTHI).

As to expression, expressed in chalaza of mature seeds, cotyledons, rosette leaves, cauline leaves, veins of stems, mature siliques, sepals and styles. Expressed at low levels in roots.

It is found in the nucleus. Its function is as follows. Transcription factor that acts as a positive regulator of abscisic acid (ABA) signaling in response to salt stress. Acts as a negative regulator ABI1, ABI2 and PP2CA, which are protein phosphatases 2C acting as negative regulator of ABA signaling. Binds to the DNA specific sequence and core element 5'-ACGT-3' found in the promoters of ABI1 and PP2CA to negatively regulate their expression during ABA-dependent salt stress response. The protein is Transcription factor MYB20 of Arabidopsis thaliana (Mouse-ear cress).